Reading from the N-terminus, the 95-residue chain is Histone-like DNA-binding protein (95 aa).

This sequence belongs to the bacterial histone-like protein family.

In Rickettsia rickettsii, this protein is Histone-like DNA-binding protein.